The sequence spans 246 residues: Pyridoxine 5'-phosphate synthase (246 aa).

Asparagine 7 provides a ligand contact to 3-amino-2-oxopropyl phosphate. Residue 9 to 10 (DH) coordinates 1-deoxy-D-xylulose 5-phosphate. 3-amino-2-oxopropyl phosphate is bound at residue arginine 18. The active-site Proton acceptor is histidine 43. Residues arginine 45 and histidine 50 each coordinate 1-deoxy-D-xylulose 5-phosphate. The active-site Proton acceptor is glutamate 70. Threonine 100 provides a ligand contact to 1-deoxy-D-xylulose 5-phosphate. Histidine 190 (proton donor) is an active-site residue. Residues glycine 191 and 212–213 (GH) contribute to the 3-amino-2-oxopropyl phosphate site.

Belongs to the PNP synthase family. As to quaternary structure, homooctamer; tetramer of dimers.

The protein resides in the cytoplasm. It carries out the reaction 3-amino-2-oxopropyl phosphate + 1-deoxy-D-xylulose 5-phosphate = pyridoxine 5'-phosphate + phosphate + 2 H2O + H(+). It functions in the pathway cofactor biosynthesis; pyridoxine 5'-phosphate biosynthesis; pyridoxine 5'-phosphate from D-erythrose 4-phosphate: step 5/5. Catalyzes the complicated ring closure reaction between the two acyclic compounds 1-deoxy-D-xylulose-5-phosphate (DXP) and 3-amino-2-oxopropyl phosphate (1-amino-acetone-3-phosphate or AAP) to form pyridoxine 5'-phosphate (PNP) and inorganic phosphate. In Bordetella petrii (strain ATCC BAA-461 / DSM 12804 / CCUG 43448), this protein is Pyridoxine 5'-phosphate synthase.